Reading from the N-terminus, the 445-residue chain is Zinc finger protein SHOOT GRAVITROPISM 5 (445 aa).

The segment covering 22–31 (SSSDPFLSSS) has biased composition (low complexity). A disordered region spans residues 22–59 (SSSDPFLSSSENGVTTTNTSTQKRKRRPAGTPDPDAEV). Polar residues predominate over residues 32–42 (ENGVTTTNTST). 3 consecutive C2H2-type zinc fingers follow at residues 73-95 (YICE…RRRH), 115-145 (YVCP…RRKH), and 151-178 (WVCE…TRGH). Zn(2+) is bound by residues cysteine 153, cysteine 156, histidine 169, cysteine 173, cysteine 180, cysteine 182, histidine 195, and cysteine 199. The CCHC-type 2; atypical zinc finger occupies 178–201 (HSCDCGRVFSRVESFIEHQDNCSA). Residues 188–200 (RVESFIEHQDNCS) are SHR-binding. Disordered stretches follow at residues 203 to 253 (RVHR…LEGR) and 281 to 314 (SSNQ…LNLS). Residues 214–248 (TAVTVPACSSRTASTVSTPSSETNYGGTVAVTTPQ) are compositionally biased toward polar residues. A compositionally biased stretch (low complexity) spans 281 to 293 (SSNQNPNQENQQQ). A coiled-coil region spans residues 340-397 (MKIAMKEKAYAEEAKREAKRQREIAENEFANAKKIRQKAQAELERAKFLKEQSMKKIS).

In terms of tissue distribution, mainly expressed in the endodermis, the gravity-sensing tissue in inflorescence stems. Mostly present in stems and flowers, and, to a lower extent, in seedlings, hypocotyls, roots and the shoot apical meristem (SAM).

The protein resides in the nucleus. In terms of biological role, transcription factor involved in inflorescence stems gravitropism, probably by regulating starch accumulation in amyloplasts of graviperceptive cells. Required for stem circumnutation movements. Regulates lateral organ morphogenesis and gravitropic responses. Acts cooperatively with IDD16 to control silique and branche orientation. Involved in the establishment of auxin gradients through the regulation of auxin biosynthesis and transport. This chain is Zinc finger protein SHOOT GRAVITROPISM 5, found in Arabidopsis thaliana (Mouse-ear cress).